Reading from the N-terminus, the 177-residue chain is Adenine phosphoribosyltransferase (177 aa).

The protein belongs to the purine/pyrimidine phosphoribosyltransferase family. In terms of assembly, homodimer.

The protein resides in the cytoplasm. The enzyme catalyses AMP + diphosphate = 5-phospho-alpha-D-ribose 1-diphosphate + adenine. It functions in the pathway purine metabolism; AMP biosynthesis via salvage pathway; AMP from adenine: step 1/1. In terms of biological role, catalyzes a salvage reaction resulting in the formation of AMP, that is energically less costly than de novo synthesis. This Rhodococcus opacus (strain B4) protein is Adenine phosphoribosyltransferase.